Here is a 531-residue protein sequence, read N- to C-terminus: Pyruvate kinase (531 aa).

R86 provides a ligand contact to substrate. The K(+) site is built by N88, S90, D121, and T122. An ATP-binding site is contributed by 88 to 91; that stretch reads NFSH. ATP contacts are provided by R128 and K211. Residue E277 coordinates Mg(2+). 3 residues coordinate substrate: G300, D301, and T333. D301 lines the Mg(2+) pocket.

It belongs to the pyruvate kinase family. As to quaternary structure, homotetramer. Mg(2+) serves as cofactor. It depends on K(+) as a cofactor.

It carries out the reaction pyruvate + ATP = phosphoenolpyruvate + ADP + H(+). The protein operates within carbohydrate degradation; glycolysis; pyruvate from D-glyceraldehyde 3-phosphate: step 5/5. This is Pyruvate kinase (PYK) from Eimeria tenella (Coccidian parasite).